The primary structure comprises 94 residues: Defensin alpha 5 (94 aa).

The N-terminal stretch at 1 to 19 (MRTIAILAAILLVALQAQA) is a signal peptide. Intrachain disulfides connect Cys65/Cys93, Cys67/Cys82, and Cys72/Cys92.

It belongs to the alpha-defensin family. Homodimer. Homotetramer. Interacts with B.antracis lef/lethal factor. In terms of processing, glycosylated. Post-translationally, proteolytically cleaved at Arg-62 by trypsin. Both the propeptide form proHD5/HD5(20-94) and HD5(56-94) are cleaved into the lumenal peptide form HD5(63-94) by trypsin. Unprocessed proHD5 exerts antimicrobial activities, but peptide potency is enhanced by peptide processing. Proteolytically cleaved in duodenal fluid; derived fragments are antimicrobially active against commensal bacteria (in vitro).

It localises to the secreted. Its subcellular location is the cytoplasmic vesicle. It is found in the secretory vesicle. Host-defense peptide that maintains sterility in the urogenital system. Has antimicrobial activity against a wide range of bacteria, including Gram-negative E.coli, P.aeruginosa and S.typhimurium, and Gram-positive E.aerogenes, S.aureus, B.cereus, E.faecium and L.monocytogenes. Confers resistance to intestinal infection by S.typhimurium. Exhibits antimicrobial activity against enteric commensal bacteria such as B.adolescentis, L.acidophilus, B.breve, L.fermentum, B.longum and S.thermophilus. Binds to bacterial membranes and causes membrane disintegration. Induces the secretion of the chemokine IL-8 by intestinal epithelial cells. Binds to B.antracis lef/lethal factor, a major virulence factor from B.anthracis, and neutralizes its enzymatic activity. The chain is Defensin alpha 5 (DEFA5) from Pan troglodytes (Chimpanzee).